We begin with the raw amino-acid sequence, 473 residues long: Aspartyl aminopeptidase 1 (473 aa).

A Zn(2+)-binding site is contributed by His-93. A substrate-binding site is contributed by His-168. 4 residues coordinate Zn(2+): Asp-262, Glu-298, Glu-299, and Asp-343. Position 298 (Glu-298) interacts with substrate. Residues Asp-343, His-346, Lys-371, and Tyr-378 each coordinate substrate. His-437 lines the Zn(2+) pocket.

This sequence belongs to the peptidase M18 family. In terms of assembly, tetrahedron-shaped homododecamer built from six homodimers. Interacts with autophagy receptor Nbr1. Zn(2+) is required as a cofactor.

The protein resides in the cytoplasm. It localises to the vacuole lumen. The enzyme catalyses Release of an N-terminal aspartate or glutamate from a peptide, with a preference for aspartate.. Functionally, aspartyl aminopeptidase that is able to remove aspartyl residue at N-terminus of angiotensin I. Also acts as a chaperone and efficiently suppressed the thermal aggregation of citrate synthase. The chain is Aspartyl aminopeptidase 1 (ape4) from Schizosaccharomyces pombe (strain 972 / ATCC 24843) (Fission yeast).